The chain runs to 343 residues: Tetraacyldisaccharide 4'-kinase (343 aa).

Position 53 to 60 (53 to 60 (TCGGAGKT)) interacts with ATP.

Belongs to the LpxK family.

The enzyme catalyses a lipid A disaccharide + ATP = a lipid IVA + ADP + H(+). It functions in the pathway glycolipid biosynthesis; lipid IV(A) biosynthesis; lipid IV(A) from (3R)-3-hydroxytetradecanoyl-[acyl-carrier-protein] and UDP-N-acetyl-alpha-D-glucosamine: step 6/6. In terms of biological role, transfers the gamma-phosphate of ATP to the 4'-position of a tetraacyldisaccharide 1-phosphate intermediate (termed DS-1-P) to form tetraacyldisaccharide 1,4'-bis-phosphate (lipid IVA). The protein is Tetraacyldisaccharide 4'-kinase of Bartonella quintana (strain Toulouse) (Rochalimaea quintana).